The chain runs to 1185 residues: MWREDLPLIELNNFEALQIGLASPEQIREWSRGEVKKPETINYRTLKPEKDGLFCERIFGPIKDWECHCGKYKRVRYKGIVCDRCGVEVTKSKVRRERMGHIELAAPVSHIWYFKGIPSRMGLILDMSPRSLEKVLYFASYVVLDPKETPLLKKQLLSEKEYRESVDKYGEEAFDAEMGAEAVKKLLAEIDLEQLSKELKEALKTSTGQKKVRTIRRLEVVESFRKSTNRPEWMIIDVIPVIPPDLRPMVQLDGGRFATSDLNDLYRRVINRNNRLKKLLDLGAPDIIVRNEKRMLQEAVDALIDNGRRGRPVTGPGNRPLKSLSDMLKGKQGRFRQNLLGKRVDYSGRSVIVVGPELKMYQCGLPKEMALELFKPFVMKKLVESGAAHNIKSSKKMVERVMPQVWDVLEEVISEHPVLLNRAPTLHRLGIQAFQPVLVEGRAIKLHPLVCTAYNADFDGDQMAVHVPLSVEAQAEARFLMLAANNILKPSDGKPVCVPTQDMILGSYYLTLDKDGVKGEGKIFSNPDEVMMAYQTGAINIHAKIKVRMTKEKDGKIISGIIETTPGKLIFNDSIPQDLGFVDRSNPENEFKLEIDFLVTKKNLGKIIDKCYTKYGATETSTMLDKIKARGYHYSTIGAITISVSDMTVPESKNRLLSDTDLAVEKIEKMYRRGFISEDERYERVIEKWTQTTEDVANALMDNLDRFNPIFMMADSGARGSKSQIKQLAGMRGLMANPSGKIIELPIRASFREGLDVLEYFISTHGARKGNADTALKTADSGYLTRRLVDVSQDVIVREEDCGSTHGYEVSEIKEGNEVIETLTERLTGRYSIEDIVDPQTGEVIVPADTYMNADLAEKVEKHGVKKVNIRSVFTCKSKHGVCAKCYGMNMATANKINIGESVGIVAAQSIGEPGTQLTMRTFHTGGVAGADITQGLPRVEELFEARKPKGLAIITEVAGTVKLEETKKKRIVHVIDDEGVDKSYDIPFGSRIKVSNGSRIEAGDEITEGSVNPHDILAIKGPKEVKNYLLSEVQKVYRLQGVDINDKHLEVVVRQMTRKVKIKESGDTELLPGTLVDVFDFEEVNEKIRQQGGEEATGDIALLGITKAALATDSFLSAASFQETTRVLTDAAIKGKSDPLLGLKENVIIGKLIPAGTGMMRYRSIKLNTDKEENDEELVNVDEA.

Cys-67, Cys-69, Cys-82, and Cys-85 together coordinate Zn(2+). Mg(2+) is bound by residues Asp-457, Asp-459, and Asp-461. Positions 802, 876, 883, and 886 each coordinate Zn(2+).

Belongs to the RNA polymerase beta' chain family. As to quaternary structure, the RNAP catalytic core consists of 2 alpha, 1 beta, 1 beta' and 1 omega subunit. When a sigma factor is associated with the core the holoenzyme is formed, which can initiate transcription. The cofactor is Mg(2+). Zn(2+) serves as cofactor.

The catalysed reaction is RNA(n) + a ribonucleoside 5'-triphosphate = RNA(n+1) + diphosphate. DNA-dependent RNA polymerase catalyzes the transcription of DNA into RNA using the four ribonucleoside triphosphates as substrates. The sequence is that of DNA-directed RNA polymerase subunit beta' from Clostridium novyi (strain NT).